Here is a 480-residue protein sequence, read N- to C-terminus: Cytochrome P450 724B1 (480 aa).

Residues 6-26 (LVLAALVILLALLLTLVLSHF) traverse the membrane as a helical segment. Residue cysteine 426 participates in heme binding.

It belongs to the cytochrome P450 family. Requires heme as cofactor. As to expression, ubiquitously expressed at low levels, but preferentially in the internodes and the florets before flowering.

It localises to the membrane. It catalyses the reaction campesterol + reduced [NADPH--hemoprotein reductase] + O2 = (22S)-22-hydroxycampesterol + oxidized [NADPH--hemoprotein reductase] + H2O + H(+). It participates in plant hormone biosynthesis; brassinosteroid biosynthesis. Involved in brassinosteroid biosynthesis. May catalyze a C6-oxidation step and may be involved to supply 6-deoxotyphasterol and typhasterol. Involved in internode elongation and seed development. Catalyzes the conversion of campesterol (CR) to (22S)-22-hydroxycampesterol (22-OHCR, 22-hydroxyCR). The protein is Cytochrome P450 724B1 of Oryza sativa subsp. japonica (Rice).